We begin with the raw amino-acid sequence, 635 residues long: Threonine--tRNA ligase (635 aa).

The TGS domain maps to 1–61 (MVSIRLPDGS…DHDVALAIVT (61 aa)). A catalytic region spans residues 242–533 (DHRKLGKQLD…LIEHHAGAMP (292 aa)). Zn(2+)-binding residues include Cys-333, His-384, and His-510.

It belongs to the class-II aminoacyl-tRNA synthetase family. Homodimer. Zn(2+) serves as cofactor.

It is found in the cytoplasm. The catalysed reaction is tRNA(Thr) + L-threonine + ATP = L-threonyl-tRNA(Thr) + AMP + diphosphate + H(+). Catalyzes the attachment of threonine to tRNA(Thr) in a two-step reaction: L-threonine is first activated by ATP to form Thr-AMP and then transferred to the acceptor end of tRNA(Thr). Also edits incorrectly charged L-seryl-tRNA(Thr). This chain is Threonine--tRNA ligase, found in Paraburkholderia phytofirmans (strain DSM 17436 / LMG 22146 / PsJN) (Burkholderia phytofirmans).